The following is an 883-amino-acid chain: Valine--tRNA ligase (883 aa).

The 'HIGH' region motif lies at 46-56 (PNVTGKLHLGH). Residues 520-524 (KMSKS) carry the 'KMSKS' region motif. K523 contributes to the ATP binding site. Residues 809-844 (LVDLLNVEEELARLEKELAKWQKELDMVGKKLSNER) adopt a coiled-coil conformation.

It belongs to the class-I aminoacyl-tRNA synthetase family. ValS type 1 subfamily. Monomer.

The protein resides in the cytoplasm. The catalysed reaction is tRNA(Val) + L-valine + ATP = L-valyl-tRNA(Val) + AMP + diphosphate. Catalyzes the attachment of valine to tRNA(Val). As ValRS can inadvertently accommodate and process structurally similar amino acids such as threonine, to avoid such errors, it has a 'posttransfer' editing activity that hydrolyzes mischarged Thr-tRNA(Val) in a tRNA-dependent manner. The polypeptide is Valine--tRNA ligase (Streptococcus pneumoniae (strain ATCC BAA-255 / R6)).